The primary structure comprises 128 residues: Cytochrome c-type biogenesis protein CcmE (128 aa).

Topologically, residues 1-8 (MQKRVRNR) are cytoplasmic. A helical; Signal-anchor for type II membrane protein transmembrane segment spans residues 9 to 29 (LITIIICFCSACLGISIILYN). At 30-128 (LEKNIVFFLP…KHDENYRPPQ (99 aa)) the chain is on the periplasmic side. Heme contacts are provided by histidine 120 and tyrosine 124.

The protein belongs to the CcmE/CycJ family.

Its subcellular location is the cell inner membrane. Heme chaperone required for the biogenesis of c-type cytochromes. Transiently binds heme delivered by CcmC and transfers the heme to apo-cytochromes in a process facilitated by CcmF and CcmH. This chain is Cytochrome c-type biogenesis protein CcmE, found in Rickettsia peacockii (strain Rustic).